The following is an 834-amino-acid chain: Protein SEY1 (834 aa).

A disordered region spans residues 1-26 (MSNVPSPTVTLEGDSPDAAHEAVSSS). The Cytoplasmic portion of the chain corresponds to 1-733 (MSNVPSPTVT…KRSIMQHVTQ (733 aa)). In terms of domain architecture, GB1/RHD3-type G spans 63-296 (PGDYRIISVF…SESFLFKPNY (234 aa)). 73–80 (GSQSTGKS) is a binding site for GTP. A coiled-coil region spans residues 659–688 (VRDKKLKRQYETVREEKEAEEEDEDEWDSE). The interval 670–689 (TVREEKEAEEEDEDEWDSED) is disordered. Over residues 676-689 (EAEEEDEDEWDSED) the composition is skewed to acidic residues. A helical transmembrane segment spans residues 734-754 (IPYYIYIVILVLGWNEFMAIL). The Lumenal portion of the chain corresponds to 755-757 (RNP). A helical transmembrane segment spans residues 758-778 (FFFTLLIMLAGATYVMYSMNL). Over 779–834 (LGPASIVVQRMANEALGLAKEKLREFVVDDHMQHGHNMKKMTTNDIELDDLSEEST) the chain is Cytoplasmic.

The protein belongs to the TRAFAC class dynamin-like GTPase superfamily. GB1/RHD3 GTPase family. RHD3 subfamily.

It localises to the endoplasmic reticulum membrane. Cooperates with the reticulon proteins and tubule-shaping DP1 family proteins to generate and maintain the structure of the tubular endoplasmic reticulum network. Has GTPase activity, which is required for its function in ER organization. The protein is Protein SEY1 of Clavispora lusitaniae (strain ATCC 42720) (Yeast).